The following is a 444-amino-acid chain: N-succinylarginine dihydrolase (444 aa).

Residues 19 to 28 (SGLSVGNIAS), N110, and 137 to 138 (HR) each bind substrate. The active site involves E174. Residue R214 coordinates substrate. H250 is a catalytic residue. Substrate-binding residues include D252 and N362. C368 functions as the Nucleophile in the catalytic mechanism.

Belongs to the succinylarginine dihydrolase family. In terms of assembly, homodimer.

It catalyses the reaction N(2)-succinyl-L-arginine + 2 H2O + 2 H(+) = N(2)-succinyl-L-ornithine + 2 NH4(+) + CO2. Its pathway is amino-acid degradation; L-arginine degradation via AST pathway; L-glutamate and succinate from L-arginine: step 2/5. Functionally, catalyzes the hydrolysis of N(2)-succinylarginine into N(2)-succinylornithine, ammonia and CO(2). The protein is N-succinylarginine dihydrolase of Aliivibrio fischeri (strain ATCC 700601 / ES114) (Vibrio fischeri).